Consider the following 1657-residue polypeptide: Putative serine/threonine-protein kinase/receptor R826 (1657 aa).

The signal sequence occupies residues 1–23; sequence MRLNSQIVFCIVVVISCLSMIEC. N-linked (GlcNAc...) asparagine; by host glycosylation is found at Asn153, Asn178, Asn238, Asn255, Asn352, Asn454, Asn476, Asn494, and Asn596. A helical membrane pass occupies residues 742–762; sequence IILAVVIPIAFIIVCIICILV. The Protein kinase 1 domain occupies 786–1049; the sequence is LELGEQLGTG…EIMTRLSNLM (264 aa). ATP is bound by residues 792-800 and Lys813; that span reads LGTGAFGEV. The active-site Proton acceptor is the Asp909. The segment at 1089 to 1115 is disordered; the sequence is VQNSYNRTDSYDLGSNNSHSSITSDTN. A Guanylate cyclase domain is found at 1134-1277; that stretch reads VVVFTDIISA…PTVTTAAAVT (144 aa). The 253-residue stretch at 1399-1651 folds into the Protein kinase 2 domain; sequence IKMGEQIGLG…DDVIIVLAKF (253 aa). Residues 1405-1413 and Lys1426 each bind ATP; that span reads IGLGSYGVV. The active-site Proton acceptor is the Asp1522.

Its subcellular location is the membrane. The catalysed reaction is L-seryl-[protein] + ATP = O-phospho-L-seryl-[protein] + ADP + H(+). The enzyme catalyses L-threonyl-[protein] + ATP = O-phospho-L-threonyl-[protein] + ADP + H(+). The polypeptide is Putative serine/threonine-protein kinase/receptor R826 (Acanthamoeba polyphaga mimivirus (APMV)).